The chain runs to 643 residues: Immediate-early phosphoprotein 57 (643 aa).

Disordered regions lie at residues 1–180 and 194–329; these read MAQK…GGCA and TGWG…QCPP. The span at 24–52 shows a compositional bias: acidic residues; it reads LDFSESEEEEEEEESSSESESDEDSDMEV. 2 stretches are compositionally biased toward low complexity: residues 57 to 71 and 83 to 100; these read QEAG…QPQQ and QQPQ…QQQR. A compositionally biased stretch (basic and acidic residues) spans 103–113; that stretch reads KRGEESGDARP. The span at 162–171 shows a compositional bias: low complexity; the sequence is QQPQSQAAQP. Over residues 215-241 the composition is skewed to basic and acidic residues; that stretch reads RRGDEDRRSGRDRRRREGRERDRESRS. A compositionally biased stretch (low complexity) spans 284 to 297; that stretch reads AGPSQAQAAQAARA. The span at 298–307 shows a compositional bias: basic and acidic residues; it reads PRQEQGERRQ. Residues 320–329 show a composition bias toward pro residues; that stretch reads QQCPPQQCPP.

Belongs to the herpesviridae UL69 family.

This Equus caballus (Horse) protein is Immediate-early phosphoprotein 57 (57).